The chain runs to 490 residues: Cytochrome P450 2C55 (490 aa).

Heme is bound at residue Cys435.

Belongs to the cytochrome P450 family. Heme serves as cofactor.

It is found in the endoplasmic reticulum membrane. It localises to the microsome membrane. The enzyme catalyses an organic molecule + reduced [NADPH--hemoprotein reductase] + O2 = an alcohol + oxidized [NADPH--hemoprotein reductase] + H2O + H(+). Metabolizes arachidonic acid mainly to 19-hydroxyeicosatetraenoic acid (HETE). The polypeptide is Cytochrome P450 2C55 (Cyp2c55) (Rattus norvegicus (Rat)).